We begin with the raw amino-acid sequence, 247 residues long: 14-3-3 protein gamma-B (247 aa).

This sequence belongs to the 14-3-3 family. In terms of assembly, homodimer, and heterodimer with other family members.

The protein resides in the cytoplasm. Its function is as follows. Adapter protein implicated in the regulation of a large spectrum of both general and specialized signaling pathways. Binds to a large number of partners, usually by recognition of a phosphoserine or phosphothreonine motif. Binding generally results in the modulation of the activity of the binding partner. This chain is 14-3-3 protein gamma-B (ywhag-b), found in Xenopus laevis (African clawed frog).